The primary structure comprises 154 residues: Crossover junction endodeoxyribonuclease RuvC (154 aa).

Residues D7, E67, and D139 contribute to the active site. The Mg(2+) site is built by D7, E67, and D139.

This sequence belongs to the RuvC family. As to quaternary structure, homodimer which binds Holliday junction (HJ) DNA. The HJ becomes 2-fold symmetrical on binding to RuvC with unstacked arms; it has a different conformation from HJ DNA in complex with RuvA. In the full resolvosome a probable DNA-RuvA(4)-RuvB(12)-RuvC(2) complex forms which resolves the HJ. It depends on Mg(2+) as a cofactor.

Its subcellular location is the cytoplasm. It carries out the reaction Endonucleolytic cleavage at a junction such as a reciprocal single-stranded crossover between two homologous DNA duplexes (Holliday junction).. Its function is as follows. The RuvA-RuvB-RuvC complex processes Holliday junction (HJ) DNA during genetic recombination and DNA repair. Endonuclease that resolves HJ intermediates. Cleaves cruciform DNA by making single-stranded nicks across the HJ at symmetrical positions within the homologous arms, yielding a 5'-phosphate and a 3'-hydroxyl group; requires a central core of homology in the junction. The consensus cleavage sequence is 5'-(A/T)TT(C/G)-3'. Cleavage occurs on the 3'-side of the TT dinucleotide at the point of strand exchange. HJ branch migration catalyzed by RuvA-RuvB allows RuvC to scan DNA until it finds its consensus sequence, where it cleaves and resolves the cruciform DNA. This Prochlorococcus marinus (strain NATL2A) protein is Crossover junction endodeoxyribonuclease RuvC.